A 1278-amino-acid polypeptide reads, in one-letter code: ABC transporter B family member 11 (1278 aa).

Basic and acidic residues-rich tracts occupy residues 1–13 and 21–35; these read MNGDGAREGDSVS and SPKEGEETKKEEKSE. The disordered stretch occupies residues 1–35; sequence MNGDGAREGDSVSHEPSTSKSPKEGEETKKEEKSE. Transmembrane regions (helical) follow at residues 55–75, 106–126, 182–202, 205–225, 285–305, and 314–334; these read VLLMICGSIGAIGNGMSLPFM, FVYLGLGTLGAAFLQVACWMI, FIQLVSTFVGGFVLAFIKGWL, LVMLTSIPLLAMAGAAMALIV, GLGLGVMFFVFFSSYALAIWF, and GYTGGAVINVIIIVVAGSMSL. The ABC transmembrane type-1 1 domain maps to 58 to 346; it reads MICGSIGAIG…TSPCVTAFAA (289 aa). Residues 381 to 617 enclose the ABC transporter 1 domain; it reads IELKDVHFSY…SEGAYSQLIR (237 aa). 416 to 423 contacts ATP; that stretch reads GESGSGKS. N-linked (GlcNAc...) asparagine glycans are attached at residues Asn-483, Asn-568, and Asn-653. Positions 629–654 are enriched in polar residues; that stretch reads ELSSGSSFRNSNLKKSMEGTSSVGNS. The interval 629–656 is disordered; the sequence is ELSSGSSFRNSNLKKSMEGTSSVGNSSR. Residues 710 to 997 enclose the ABC transmembrane type-1 2 domain; the sequence is LLLGTVAAAI…SSTFAPDSSK (288 aa). 2 consecutive transmembrane segments (helical) span residues 711–731 and 751–771; these read LLGTVAAAINGAIFPLFGILI and FWAIIFVALGVTSLIVSPTQM. The N-linked (GlcNAc...) asparagine glycan is linked to Asn-806. Helical transmembrane passes span 824–844, 845–865, 932–952, and 971–991; these read ALVGDALSLAVQNVASAASGL, IIAFTASWELALIILVMLPLI, GFISGLGFGFSFFILFCVYAT, and VFQVFFALTMAAIGISQSSTF. The region spanning 1032–1271 is the ABC transporter 2 domain; sequence IELRHLSFTY…EGGVYASLVQ (240 aa). An ATP-binding site is contributed by 1067–1074; the sequence is GESGSGKS. Residues Asn-1121 and Asn-1222 are each glycosylated (N-linked (GlcNAc...) asparagine).

This sequence belongs to the ABC transporter superfamily. ABCB family. Multidrug resistance exporter (TC 3.A.1.201) subfamily. As to expression, present in roots and flower buds.

It is found in the membrane. The enzyme catalyses (indol-3-yl)acetate(in) + ATP + H2O = (indol-3-yl)acetate(out) + ADP + phosphate + H(+). Involved in the regulation of auxin transport required for pistil elongation. The polypeptide is ABC transporter B family member 11 (Arabidopsis thaliana (Mouse-ear cress)).